Reading from the N-terminus, the 208-residue chain is Protein-L-isoaspartate O-methyltransferase (208 aa).

Ser59 is a catalytic residue.

This sequence belongs to the methyltransferase superfamily. L-isoaspartyl/D-aspartyl protein methyltransferase family.

Its subcellular location is the cytoplasm. The enzyme catalyses [protein]-L-isoaspartate + S-adenosyl-L-methionine = [protein]-L-isoaspartate alpha-methyl ester + S-adenosyl-L-homocysteine. In terms of biological role, catalyzes the methyl esterification of L-isoaspartyl residues in peptides and proteins that result from spontaneous decomposition of normal L-aspartyl and L-asparaginyl residues. It plays a role in the repair and/or degradation of damaged proteins. The protein is Protein-L-isoaspartate O-methyltransferase of Proteus mirabilis (strain HI4320).